The following is a 515-amino-acid chain: Cytoplasmic dynein 1 light intermediate chain 1 (515 aa).

Over residues 1 to 24 (MAAVGRAGSFGSSSASGAANNASA) the composition is skewed to low complexity. The disordered stretch occupies residues 1 to 34 (MAAVGRAGSFGSSSASGAANNASAELRAGGEEDD). 64-71 (GEDGAGKT) contributes to the ATP binding site. 2 disordered regions span residues 370–424 (QSQL…DPNM) and 445–515 (KTGS…GEAS). The segment covering 397–409 (RTPNRSVTSNVAS) has biased composition (polar residues). Residues 448 to 468 (SPGGPGGVGGSPGGGSAGGTG) show a composition bias toward gly residues. Basic and acidic residues predominate over residues 490–499 (ELDRISRKPE). The span at 502 to 515 (SPTSPTSPTEGEAS) shows a compositional bias: polar residues.

Belongs to the dynein light intermediate chain family. In terms of assembly, homodimer. The cytoplasmic dynein 1 complex consists of two catalytic heavy chains (HCs) and a number of non-catalytic subunits presented by intermediate chains (ICs). Phosphorylated.

It is found in the cytoplasm. It localises to the cytoskeleton. Its subcellular location is the chromosome. The protein resides in the centromere. The protein localises to the kinetochore. It is found in the spindle pole. It localises to the recycling endosome membrane. Its function is as follows. Acts as one of several non-catalytic accessory components of the cytoplasmic dynein 1 complex that are thought to be involved in linking dynein to cargos and to adapter proteins that regulate dynein function. Cytoplasmic dynein 1 acts as a motor for the intracellular retrograde motility of vesicles and organelles along microtubules. May play a role in binding dynein to membranous organelles or chromosomes. May regulate the movement of peripheral sorting endosomes along microtubule tracks toward the microtubule organizing center/centrosome, generating the endosomal recycling compartment. This chain is Cytoplasmic dynein 1 light intermediate chain 1 (DYNC1LI1), found in Gallus gallus (Chicken).